A 452-amino-acid chain; its full sequence is Phosphatidylserine synthase 2 (452 aa).

Residues Met-1–Arg-35 lie on the Cytoplasmic side of the membrane. Residues Ala-36 to Glu-56 traverse the membrane as a helical segment. Residues Glu-57–Gly-69 lie on the Lumenal side of the membrane. Residues Ile-70–Phe-90 traverse the membrane as a helical segment. Topologically, residues Thr-91–Arg-99 are cytoplasmic. A helical transmembrane segment spans residues Phe-100 to Val-120. Topologically, residues His-121–Arg-286 are lumenal. A helical transmembrane segment spans residues Trp-287 to Leu-307. Lys-308 is a topological domain (cytoplasmic). Residues Phe-309 to Asn-329 traverse the membrane as a helical segment. Over Val-330–Lys-349 the chain is Lumenal. The helical transmembrane segment at Lys-350 to Val-370 threads the bilayer. The Cytoplasmic segment spans residues Lys-371–Thr-376. Residues Ile-377–Leu-397 traverse the membrane as a helical segment. Residues Val-398–Ser-452 are Lumenal-facing. Residues Arg-419 to Ser-452 are disordered. Polar residues predominate over residues Ser-430 to Met-444.

This sequence belongs to the phosphatidyl serine synthase family.

Its subcellular location is the endoplasmic reticulum membrane. The enzyme catalyses a 1,2-diacyl-sn-glycero-3-phosphoethanolamine + L-serine = a 1,2-diacyl-sn-glycero-3-phospho-L-serine + ethanolamine. It carries out the reaction 1-hexadecanoyl-2-(9Z-octadecenoyl)-sn-glycero-3-phosphoethanolamine + L-serine = 1-hexadecanoyl-2-(9Z-octadecenoyl)-sn-glycero-3-phospho-L-serine + ethanolamine. It catalyses the reaction 1-hexadecanoyl-2-(4Z,7Z,10Z,13Z,16Z,19Z-docosahexaenoyl)-sn-glycero-3-phosphoethanolamine + L-serine = 1-hexadecanoyl-2-(4Z,7Z,10Z,13Z,16Z,19Z-docosahexaenoyl)-sn-glycero-3-phosphoserine + ethanolamine. The catalysed reaction is 1-octadecanoyl-2-(5Z,8Z,11Z,14Z)-eicosatetraenoyl-sn-glycero-3-phosphoethanolamine + L-serine = 1-octadecanoyl-2-(5Z,8Z,11Z,14Z)-eicosatetraenoyl-sn-glycero-3-phosphoserine + ethanolamine. The enzyme catalyses 1-octadecanoyl-2-(4Z,7Z,10Z,13Z,16Z,19Z-docosahexaenoyl)-sn-glycero-3-phosphoethanolamine + L-serine = 1-octadecanoyl-2-(4Z,7Z,10Z,13Z,16Z,19Z-docosahexaenoyl)-sn-glycero-3-phosphoserine + ethanolamine. It carries out the reaction 1-(1Z-octadecenyl)-2-(4Z,7Z,10Z,13Z,16Z,19Z-docosahexaenoyl)-sn-glycero-3-phosphoethanolamine + L-serine = 1-(1Z-octadecenyl)-2-(4Z,7Z,10Z,13Z,16Z,19Z-docosahexaenoyl)-sn-glycero-3-phospho-L-serine + ethanolamine. It catalyses the reaction 1-octadecanoyl-2-(9Z-octadecenoyl)-sn-glycero-3-phosphoethanolamine + L-serine = 1-octadecanoyl-2-(9Z-octadecenoyl)-sn-glycero-3-phospho-L-serine + ethanolamine. The catalysed reaction is 1-(1Z-octadecenyl)-2-(9Z-octadecenoyl)-sn-glycero-3-phosphoethanolamine + L-serine = 1-(1Z-octadecenyl)-2-(9Z-octadecenoyl)-sn-glycero-3-phospho-L-serine + ethanolamine. The enzyme catalyses 1-(1Z-octadecenyl)-2-(5Z,8Z,11Z,14Z- eicosatetraenoyl)-sn-glycero-3-phosphoethanolamine + L-serine = 1-(1Z-octadecenyl)-2-(5Z,8Z,11Z,14Z-eicosatetraenoyl)-sn-glycero-3-phospho-L-serine + ethanolamine. The protein operates within phospholipid metabolism; phosphatidylserine biosynthesis. Its function is as follows. Catalyzes a base-exchange reaction in which the polar head group of phosphatidylethanolamine (PE) or phosphatidylcholine (PC) is replaced by L-serine. Catalyzes the conversion of phosphatatidylethanolamine and does not act on phosphatidylcholine. Can utilize both phosphatidylethanolamine (PE) plasmalogen and diacyl PE as substrate and the latter is six times better utilized, indicating the importance of an ester linkage at the sn-1 position. Although it shows no sn-1 fatty acyl preference, exhibits significant preference towards docosahexaenoic acid (22:6n-3) compared with 18:1 or 20:4 at the sn-2 position. The chain is Phosphatidylserine synthase 2 (ptdss2) from Danio rerio (Zebrafish).